Consider the following 435-residue polypeptide: ATP-dependent RNA helicase RhlB (435 aa).

A Q motif motif is present at residues 9–37 (QKFADLGLNPQVVEGLEKKGFEFCTPIQA). The Helicase ATP-binding domain maps to 40–219 (LPVLLSGQDI…FEHMHNPEHV (180 aa)). Position 53 to 60 (53 to 60 (AQTGTGKT)) interacts with ATP. The DEAD box motif lies at 165–168 (DEAD). One can recognise a Helicase C-terminal domain in the interval 245 to 390 (ALLQTLIEEE…VSDYDSSALI (146 aa)). The tract at residues 395 to 435 (APVRTPSARNQQRRTNTGGARSGDRKSNNRRPRQPRQHKEA) is disordered. Residues 401–413 (SARNQQRRTNTGG) show a composition bias toward polar residues. The span at 422-435 (NNRRPRQPRQHKEA) shows a compositional bias: basic residues.

This sequence belongs to the DEAD box helicase family. RhlB subfamily. As to quaternary structure, component of the RNA degradosome, which is a multiprotein complex involved in RNA processing and mRNA degradation.

The protein resides in the cytoplasm. It carries out the reaction ATP + H2O = ADP + phosphate + H(+). Functionally, DEAD-box RNA helicase involved in RNA degradation. Has RNA-dependent ATPase activity and unwinds double-stranded RNA. In Vibrio vulnificus (strain CMCP6), this protein is ATP-dependent RNA helicase RhlB.